Consider the following 91-residue polypeptide: Early E3B 10.4 kDa protein (91 aa).

An N-terminal signal peptide occupies residues 1-22; it reads MIPRNFFFTILICPFNVCATFT. At 23–34 the chain is on the lumenal side; that stretch reads AVATASPDCIGP. Residues 35–60 form a helical membrane-spanning segment; that stretch reads FASYALFAFVTCICVCSIVCLVINFF. Residues 61 to 91 lie on the Cytoplasmic side of the membrane; the sequence is QLVDWIFVRIAYLRHHPEYRNQNVAALLRLI.

It belongs to the adenoviridae E3B family.

The protein localises to the host endoplasmic reticulum membrane. Its function is as follows. Down-regulates the EGF receptor. The chain is Early E3B 10.4 kDa protein from Human adenovirus B serotype 3 (HAdV-3).